The primary structure comprises 1435 residues: Trafficking protein particle complex subunit 8 (1435 aa).

3 positions are modified to phosphoserine: Ser273, Ser279, and Ser309. The segment at 301–321 is disordered; sequence QLEQSSDPSNSIDGPDHLRSA. The span at 302–312 shows a compositional bias: polar residues; sequence LEQSSDPSNSI.

Belongs to the TRS85 family. In terms of assembly, component of the multisubunit TRAPP (transport protein particle) complex, which includes TRAPPC2, TRAPPC2L, TRAPPC3, TRAPPC3L, TRAPPC4, TRAPPC5, TRAPPC8, TRAPPC9, TRAPPC10, TRAPPC11 and TRAPPC12. Interacts with TBC1D14. Interacts (via C-terminus) with TMEM131 (via C-terminus); the interaction is direct and is involved in collagen secretion.

The protein localises to the golgi apparatus. It localises to the cis-Golgi network. Plays a role in endoplasmic reticulum to Golgi apparatus trafficking at a very early stage. Maintains together with TBC1D14 the cycling pool of ATG9 required for initiation of autophagy. Involved in collagen secretion. The protein is Trafficking protein particle complex subunit 8 (TRAPPC8) of Homo sapiens (Human).